A 432-amino-acid chain; its full sequence is Transcriptional adapter 3 (432 aa).

A Glycyl lysine isopeptide (Lys-Gly) (interchain with G-Cter in SUMO2) cross-link involves residue Lys21. The stretch at Ile40 to Gln69 forms a coiled coil. Residues Gly87–Gln127 are disordered. A Glycyl lysine isopeptide (Lys-Gly) (interchain with G-Cter in SUMO2) cross-link involves residue Lys129. Composition is skewed to basic and acidic residues over residues Asp211–Lys223 and Leu232–Pro251. 2 disordered regions span residues Asp211–Phe257 and Glu271–Lys319. A phosphoserine mark is found at Ser280 and Ser298. Positions Ala295–Pro305 are enriched in polar residues. The stretch at Leu367–Thr407 forms a coiled coil. At Lys418 the chain carries N6-acetyllysine.

It belongs to the NGG1 family. As to quaternary structure, the PCAF complex is composed of a number of TBP-associated factors (TAFS), such as TAF5, TAF5L, TAF6, TAF6L, TAF9, TAF10 and TAF12, PCAF, and also PCAF-associated factors (PAFs), such as TADA2L/ADA2, TADA3L/ADA3 and SPT3. Interacts directly with TADA2L and PCAF and also with the high-risk HPV oncoprotein E6. Component of the STAGA transcription coactivator-HAT complex, at least composed of SUPT3H, GCN5L2, TAF5L, TAF6L, SUPT7L, TADA3L, TAD1L, TAF10, TAF12, TRRAP and TAF9. Component of the TFTC-HAT complex. Component of the ADA2A-containing complex (ATAC), composed of KAT14, KAT2A, TADA2L, TADA3L, ZZ3, MBIP, WDR5, YEATS2, CCDC101 and DR1.

It localises to the nucleus. Its function is as follows. Functions as a component of the PCAF complex. The PCAF complex is capable of efficiently acetylating histones in a nucleosomal context. The PCAF complex could be considered as the human version of the yeast SAGA complex. Also known as a coactivator for p53/TP53-dependent transcriptional activation. Component of the ATAC complex, a complex with histone acetyltransferase activity on histones H3 and H4. This is Transcriptional adapter 3 (TADA3) from Pongo abelii (Sumatran orangutan).